The primary structure comprises 174 residues: Transcription factor bHLH36 (174 aa).

The region spanning 1 to 53 (MEKMMHRETERQRRQEMASLYASLRSLLPLHFIKGKRSTSDQVNEAVNYIKYL) is the bHLH domain.

Homodimer. As to expression, expressed constitutively in roots, leaves, stems, and flowers.

It localises to the nucleus. In Arabidopsis thaliana (Mouse-ear cress), this protein is Transcription factor bHLH36 (BHLH36).